A 170-amino-acid chain; its full sequence is Brassinosteroid-responsive RING protein 1 (170 aa).

The helical transmembrane segment at 15–37 (LFVQTLSILGFIRTIVFSIFRFL) threads the bilayer. The RING-type; atypical zinc finger occupies 94–137 (CAVCLYEFEGEQEIRWLRNCRHIFHRSCLDRWMDHDQKTCPLCR).

Belongs to the RING-type zinc finger family. As to expression, highly expressed in stems, rosette leaves and siliques, and moderately expressed in roots, cauline leaves and flower. Detected at low levels in seeds.

It is found in the membrane. Its function is as follows. May be involved in the brassinosteroids (BRs) signaling pathway and regulate the growth and development of rosette leaves. Seems to prevent over development of leaves and inflorescence stems. This Arabidopsis thaliana (Mouse-ear cress) protein is Brassinosteroid-responsive RING protein 1.